Here is a 398-residue protein sequence, read N- to C-terminus: Succinate--CoA ligase [ADP-forming] subunit beta (398 aa).

An ATP-grasp domain is found at 9–254; the sequence is KALLKSYGAP…TTEEDEKEIE (246 aa). Residues lysine 46, 53-55, glutamate 109, alanine 112, and glutamate 117 contribute to the ATP site; that span reads GRG. Residues asparagine 209 and aspartate 223 each contribute to the Mg(2+) site. Substrate is bound by residues asparagine 274 and 331 to 333; that span reads GIM.

The protein belongs to the succinate/malate CoA ligase beta subunit family. In terms of assembly, heterotetramer of two alpha and two beta subunits. It depends on Mg(2+) as a cofactor.

The enzyme catalyses succinate + ATP + CoA = succinyl-CoA + ADP + phosphate. It carries out the reaction GTP + succinate + CoA = succinyl-CoA + GDP + phosphate. It participates in carbohydrate metabolism; tricarboxylic acid cycle; succinate from succinyl-CoA (ligase route): step 1/1. Its function is as follows. Succinyl-CoA synthetase functions in the citric acid cycle (TCA), coupling the hydrolysis of succinyl-CoA to the synthesis of either ATP or GTP and thus represents the only step of substrate-level phosphorylation in the TCA. The beta subunit provides nucleotide specificity of the enzyme and binds the substrate succinate, while the binding sites for coenzyme A and phosphate are found in the alpha subunit. The protein is Succinate--CoA ligase [ADP-forming] subunit beta of Sinorhizobium medicae (strain WSM419) (Ensifer medicae).